A 437-amino-acid polypeptide reads, in one-letter code: Nuclear hormone receptor family member nhr-100 (437 aa).

The nuclear receptor DNA-binding region spans 21-96; sequence DTSCLVCGDP…VGMDANAVRS (76 aa). 2 NR C4-type zinc fingers span residues 24 to 44 and 60 to 79; these read CLVC…CNGC and CSFN…CRAC. Residues 141-409 form the NR LBD domain; the sequence is QTKEIIAHML…SGGGLPYDIH (269 aa).

It belongs to the nuclear hormone receptor family.

The protein resides in the nucleus. Functionally, orphan nuclear receptor. The chain is Nuclear hormone receptor family member nhr-100 (nhr-100) from Caenorhabditis elegans.